Here is a 186-residue protein sequence, read N- to C-terminus: Adenylate kinase (186 aa).

An ATP-binding site is contributed by 10–15 (GSGKGT). Positions 30–55 (ATGDVFRERMKTDMALRDIVSSGGYV) are NMP. Residues T31, R36, 53 to 55 (GYV), 81 to 84 (GYPR), and Q88 contribute to the AMP site. The tract at residues 122–132 (ARSKESGRTDD) is LID. R123 is a binding site for ATP. Residues R129 and R140 each coordinate AMP. K168 lines the ATP pocket.

It belongs to the adenylate kinase family. Monomer.

Its subcellular location is the cytoplasm. The enzyme catalyses AMP + ATP = 2 ADP. It participates in purine metabolism; AMP biosynthesis via salvage pathway; AMP from ADP: step 1/1. Functionally, catalyzes the reversible transfer of the terminal phosphate group between ATP and AMP. Plays an important role in cellular energy homeostasis and in adenine nucleotide metabolism. This Tropheryma whipplei (strain TW08/27) (Whipple's bacillus) protein is Adenylate kinase.